We begin with the raw amino-acid sequence, 783 residues long: Heat shock transcription factor (783 aa).

The tract at residues 1 to 59 (MTTNLYAIAGPSKPTTPTSTPSPRSEPPSPLKSLTSLPTNPLNSHGTSTPNTLTNQLSS) is disordered. 2 stretches are compositionally biased toward low complexity: residues 11 to 23 (PSKP…TPSP) and 31 to 42 (LKSLTSLPTNPL). Residues 43-59 (NSHGTSTPNTLTNQLSS) show a composition bias toward polar residues. A DNA-binding region spans residues 78-168 (MKVPAFLNKL…PIELWEFANP (91 aa)). Residues 181–262 (VTRKNNRPSN…PGSVPPSHTS (82 aa)) are disordered. Composition is skewed to low complexity over residues 189-199 (SNSGVGPSSSV) and 209-233 (STRS…ISQG). Residues 238 to 262 (NHSTSGKYLITDGTTPGSVPPSHTS) show a composition bias toward polar residues. The interval 280-333 (GIAAIRQTQASIATDLRKLQASNEALWRQAYETQEKQRKHEETIDLIVSFLERL) is involved in trimerization. 2 stretches are compositionally biased toward basic and acidic residues: residues 350 to 372 (RGVG…SRFA) and 399 to 415 (TGEH…DRLV). 3 disordered regions span residues 350–554 (RGVG…LLSP), 599–652 (QALA…TLAL), and 736–783 (QGLA…KSES). The segment covering 418–448 (GSNSEYSIPSVKRTSSSSHPISLGQLGSSRF) has biased composition (polar residues). Composition is skewed to low complexity over residues 452–467 (PSED…GSTS), 497–511 (LSPL…PSSS), 522–550 (PFPS…PSQP), and 616–632 (NPNG…AHGM). The segment covering 742–752 (GEEEGEREVEG) has biased composition (acidic residues). Over residues 753-765 (DGGVSSSGAGAGA) the composition is skewed to gly residues.

It belongs to the HSF family. In terms of assembly, homotrimer. Homotrimerization increases the affinity of HSF1 to DNA. Interacts with transcriptional coregulator SSA1 on chromatin.

The protein localises to the nucleus. DNA-binding transcription factor that specifically binds heat shock promoter elements (HSE) and activates transcription. Together with its coregulator SSA1, activates expression of laccase LAC1 during glucose starvation. The sequence is that of Heat shock transcription factor from Cryptococcus neoformans var. neoformans serotype D (strain JEC21 / ATCC MYA-565) (Filobasidiella neoformans).